A 258-amino-acid chain; its full sequence is UPF0246 protein YaaA (258 aa).

Belongs to the UPF0246 family.

In Shigella sonnei (strain Ss046), this protein is UPF0246 protein YaaA.